Consider the following 452-residue polypeptide: Adenosylmethionine-8-amino-7-oxononanoate aminotransferase (452 aa).

116–117 lines the pyridoxal 5'-phosphate pocket; it reads GS. A substrate-binding site is contributed by Y152. Residue D257 participates in pyridoxal 5'-phosphate binding. Positions 286, 321, and 414 each coordinate substrate. Residue K286 is modified to N6-(pyridoxal phosphate)lysine.

This sequence belongs to the class-III pyridoxal-phosphate-dependent aminotransferase family. BioA subfamily. Homodimer. The cofactor is pyridoxal 5'-phosphate.

The protein localises to the cytoplasm. The enzyme catalyses (8S)-8-amino-7-oxononanoate + S-adenosyl-L-methionine = S-adenosyl-4-methylsulfanyl-2-oxobutanoate + (7R,8S)-7,8-diammoniononanoate. It participates in cofactor biosynthesis; biotin biosynthesis; 7,8-diaminononanoate from 8-amino-7-oxononanoate (SAM route): step 1/1. Its function is as follows. Catalyzes the transfer of the alpha-amino group from S-adenosyl-L-methionine (SAM) to 7-keto-8-aminopelargonic acid (KAPA) to form 7,8-diaminopelargonic acid (DAPA). It is the only aminotransferase known to utilize SAM as an amino donor. The chain is Adenosylmethionine-8-amino-7-oxononanoate aminotransferase from Staphylococcus aureus (strain NCTC 8325 / PS 47).